The following is a 242-amino-acid chain: Ubiquinone biosynthesis O-methyltransferase (242 aa).

S-adenosyl-L-methionine contacts are provided by arginine 44, glycine 64, aspartate 85, and methionine 129.

The protein belongs to the methyltransferase superfamily. UbiG/COQ3 family.

The enzyme catalyses a 3-demethylubiquinol + S-adenosyl-L-methionine = a ubiquinol + S-adenosyl-L-homocysteine + H(+). The catalysed reaction is a 3-(all-trans-polyprenyl)benzene-1,2-diol + S-adenosyl-L-methionine = a 2-methoxy-6-(all-trans-polyprenyl)phenol + S-adenosyl-L-homocysteine + H(+). It functions in the pathway cofactor biosynthesis; ubiquinone biosynthesis. Functionally, O-methyltransferase that catalyzes the 2 O-methylation steps in the ubiquinone biosynthetic pathway. In Klebsiella pneumoniae subsp. pneumoniae (strain ATCC 700721 / MGH 78578), this protein is Ubiquinone biosynthesis O-methyltransferase.